Consider the following 194-residue polypeptide: Peptidyl-tRNA hydrolase (194 aa).

Tyrosine 16 contributes to the tRNA binding site. Histidine 21 acts as the Proton acceptor in catalysis. The tRNA site is built by phenylalanine 67, asparagine 69, and asparagine 115.

It belongs to the PTH family. As to quaternary structure, monomer.

It localises to the cytoplasm. It carries out the reaction an N-acyl-L-alpha-aminoacyl-tRNA + H2O = an N-acyl-L-amino acid + a tRNA + H(+). Functionally, hydrolyzes ribosome-free peptidyl-tRNAs (with 1 or more amino acids incorporated), which drop off the ribosome during protein synthesis, or as a result of ribosome stalling. In terms of biological role, catalyzes the release of premature peptidyl moieties from peptidyl-tRNA molecules trapped in stalled 50S ribosomal subunits, and thus maintains levels of free tRNAs and 50S ribosomes. The chain is Peptidyl-tRNA hydrolase from Citrobacter koseri (strain ATCC BAA-895 / CDC 4225-83 / SGSC4696).